A 35-amino-acid chain; its full sequence is Phospholipase A2 bitanarin (35 aa).

This sequence belongs to the phospholipase A2 family. Group II subfamily. In terms of assembly, monomer. The cofactor is Ca(2+). Post-translationally, contains 14 disulfide bonds. Expressed by the venom gland.

The protein localises to the secreted. The enzyme catalyses a 1,2-diacyl-sn-glycero-3-phosphocholine + H2O = a 1-acyl-sn-glycero-3-phosphocholine + a fatty acid + H(+). Functionally, snake venom phospholipase A2 (PLA2) that is the first competitive blocker of nicotinic acetylcholine receptors (nAChRs). Competes with alpha-bungarotoxin for binding to nAChRs and acetylcholine binding proteins (AChBPs) and blocks acetylcholine-elicited current. PLA2 catalyzes the calcium-dependent hydrolysis of the 2-acyl groups in 3-sn-phosphoglycerides. This is Phospholipase A2 bitanarin from Bitis arietans (African puff adder).